The primary structure comprises 49 residues: Small, acid-soluble spore protein O (49 aa).

The interval 1-49 is disordered; that stretch reads MGKRKANHTISGMNAASAQGQGTGYNEEFANEPLTPAERQNNKKRKKNQ. Over residues 8 to 20 the composition is skewed to polar residues; sequence HTISGMNAASAQG.

It belongs to the SspO family.

Its subcellular location is the spore core. The chain is Small, acid-soluble spore protein O from Bacillus cereus (strain B4264).